Here is a 771-residue protein sequence, read N- to C-terminus: Choline transporter-like protein 1 (771 aa).

The helical transmembrane segment at 96-116 threads the bilayer; sequence FLFFVFLCGWVVVAGFGIMWG. Asparagine 141 and asparagine 259 each carry an N-linked (GlcNAc...) asparagine glycan. 4 consecutive transmembrane segments (helical) span residues 312 to 332, 335 to 355, 392 to 412, and 441 to 461; these read WWQT…WTVI, LLGS…LGFG, LVVA…ILFI, and LFPF…AIWL. Asparagine 480 is a glycosylation site (N-linked (GlcNAc...) asparagine). Transmembrane regions (helical) follow at residues 514 to 534, 566 to 586, 603 to 623, 662 to 682, and 701 to 721; these read LFAF…ALAG, LGSI…RVLL, WFLM…KFLT, AGIL…ILSF, and YYFV…DLFF.

Belongs to the CTL (choline transporter-like) family.

Its subcellular location is the membrane. The sequence is that of Choline transporter-like protein 1 (chtl-1) from Caenorhabditis elegans.